The following is an 806-amino-acid chain: WEB family protein At3g02930, chloroplastic (806 aa).

A chloroplast-targeting transit peptide spans 1-78 (MASKIKNGLS…PTPPEKTQIR (78 aa)). Disordered regions lie at residues 1 to 94 (MASK…QIKE) and 380 to 403 (KSEQ…EKLK). Residues 9–22 (LSDTTLRKSSSTSL) show a composition bias toward low complexity. Over residues 34–59 (PDSNSPSPTQQQSRLSFERPSSNSKP) the composition is skewed to polar residues. Coiled-coil stretches lie at residues 88–530 (QSVQ…FESA), 585–662 (DCLK…IEEN), and 698–757 (ETLD…EDLN). A compositionally biased stretch (basic and acidic residues) spans 391–403 (ESSKSEKEAEKLK). 2 disordered regions span residues 684–725 (ENGY…EDET) and 746–777 (KESA…EDEL). 2 stretches are compositionally biased toward basic and acidic residues: residues 685 to 699 (NGYR…KVET) and 706 to 725 (KLEE…EDET). The span at 759–769 (VDQSQKTSPVN) shows a compositional bias: polar residues.

Belongs to the WEB family.

Its subcellular location is the plastid. The protein localises to the chloroplast. In Arabidopsis thaliana (Mouse-ear cress), this protein is WEB family protein At3g02930, chloroplastic.